Here is a 108-residue protein sequence, read N- to C-terminus: Cytochrome c6 (108 aa).

The first 23 residues, 1–23, serve as a signal peptide directing secretion; it reads MRLLFAFFIICHIFTNNVQLTFA. Heme c is bound by residues Cys37, Cys40, His41, and Met81.

The protein belongs to the cytochrome c family. PetJ subfamily. In terms of assembly, monomer. Post-translationally, binds 1 heme c group covalently per subunit.

The protein localises to the plastid. It is found in the chloroplast thylakoid lumen. Functionally, functions as an electron carrier between membrane-bound cytochrome b6-f and photosystem I in oxygenic photosynthesis. In Gracilaria tenuistipitata var. liui (Red alga), this protein is Cytochrome c6.